A 92-amino-acid chain; its full sequence is Sec-independent protein translocase protein TatA (92 aa).

The helical transmembrane segment at 2-22 (IPANFGGTELIILLVIILLLF) threads the bilayer. The tract at residues 43–92 (KGTSGAYEELEEKKGEEEKDEGGKKEAEASGRGEEEQQARAAGEAGRKQG) is disordered. The segment covering 53 to 80 (EEKKGEEEKDEGGKKEAEASGRGEEEQQ) has biased composition (basic and acidic residues).

It belongs to the TatA/E family. In terms of assembly, the Tat system comprises two distinct complexes: a TatABC complex, containing multiple copies of TatA, TatB and TatC subunits, and a separate TatA complex, containing only TatA subunits. Substrates initially bind to the TatABC complex, which probably triggers association of the separate TatA complex to form the active translocon.

The protein localises to the cell membrane. Part of the twin-arginine translocation (Tat) system that transports large folded proteins containing a characteristic twin-arginine motif in their signal peptide across membranes. TatA could form the protein-conducting channel of the Tat system. This chain is Sec-independent protein translocase protein TatA, found in Rubrobacter xylanophilus (strain DSM 9941 / JCM 11954 / NBRC 16129 / PRD-1).